Here is a 617-residue protein sequence, read N- to C-terminus: Protein fem-1 homolog C (617 aa).

Position 1 is an N-acetylmethionine (Met1). 7 ANK repeats span residues Asp2 to Val31, Asn40 to Val70, Glu82 to Asn111, Thr115 to Val144, His148 to Arg177, Lys181 to Lys210, and Tyr213 to Thr242. 2 TPR repeats span residues Ile245–Asp279 and Ser338–Asn371. 2 ANK repeats span residues Asn481–Val523 and Asp527–Ala556.

Belongs to the fem-1 family. Component of a Cul2-RING (CRL2) E3 ubiquitin-protein ligase complex, also named ECS (Elongin BC-CUL2/5-SOCS-box protein) complex, composed of CUL2, Elongin BC (ELOB and ELOC), RBX1 and substrate-specific adapter FEM1C. Widely expressed. Highly expressed in kidney, cardiac tissue, skeletal muscle and testis. Expressed at lower levels in other tissues, including cartilage.

It functions in the pathway protein modification; protein ubiquitination. In terms of biological role, substrate-recognition component of a Cul2-RING (CRL2) E3 ubiquitin-protein ligase complex of the DesCEND (destruction via C-end degrons) pathway, which recognizes a C-degron located at the extreme C terminus of target proteins, leading to their ubiquitination and degradation. The C-degron recognized by the DesCEND pathway is usually a motif of less than ten residues and can be present in full-length proteins, truncated proteins or proteolytically cleaved forms. The CRL2(FEM1C) complex specifically recognizes proteins with an arginine at the C-terminus: recognizes and binds proteins ending with -Lys/Arg-Xaa-Arg and -Lys/Arg-Xaa-Xaa-Arg C-degrons, such as SIL1 or OR51B2, leading to their ubiquitination and degradation. The CRL2(FEM1C) complex mediates ubiquitination and degradation of truncated MSRB1/SEPX1 selenoproteins produced by failed UGA/Sec decoding. Promotes ubiquitination and degradation of SLBP. The chain is Protein fem-1 homolog C from Homo sapiens (Human).